We begin with the raw amino-acid sequence, 497 residues long: Glycerol kinase 2 (497 aa).

Residue T13 coordinates ADP. T13, T14, and S15 together coordinate ATP. A sn-glycerol 3-phosphate-binding site is contributed by T13. R17 is an ADP binding site. R83, E84, Y134, and D241 together coordinate sn-glycerol 3-phosphate. Positions 83, 84, 134, 241, and 242 each coordinate glycerol. Residues T263 and G305 each coordinate ADP. The ATP site is built by T263, G305, Q309, and G406. ADP-binding residues include G406 and N410.

The protein belongs to the FGGY kinase family.

It catalyses the reaction glycerol + ATP = sn-glycerol 3-phosphate + ADP + H(+). It participates in polyol metabolism; glycerol degradation via glycerol kinase pathway; sn-glycerol 3-phosphate from glycerol: step 1/1. In terms of biological role, key enzyme in the regulation of glycerol uptake and metabolism. Catalyzes the phosphorylation of glycerol to yield sn-glycerol 3-phosphate. This Sulfolobus acidocaldarius (strain ATCC 33909 / DSM 639 / JCM 8929 / NBRC 15157 / NCIMB 11770) protein is Glycerol kinase 2.